We begin with the raw amino-acid sequence, 215 residues long: Pyrrolidone-carboxylate peptidase (215 aa).

Catalysis depends on residues E78, C141, and H165.

The protein belongs to the peptidase C15 family. Homotetramer.

The protein resides in the cytoplasm. The enzyme catalyses Release of an N-terminal pyroglutamyl group from a polypeptide, the second amino acid generally not being Pro.. Its function is as follows. Removes 5-oxoproline from various penultimate amino acid residues except L-proline. This is Pyrrolidone-carboxylate peptidase from Streptococcus pyogenes serotype M12 (strain MGAS2096).